A 115-amino-acid polypeptide reads, in one-letter code: NADH-ubiquinone oxidoreductase chain 3 (115 aa).

The next 3 membrane-spanning stretches (helical) occupy residues 3-23 (LIMVISINIILSSILILVAFW), 55-75 (FFLVAITFLLFDLEIALLLPI), and 84-104 (INTMLLAAFILVSILALGLAY).

Belongs to the complex I subunit 3 family. In terms of assembly, core subunit of respiratory chain NADH dehydrogenase (Complex I) which is composed of 45 different subunits. Interacts with TMEM186. Interacts with TMEM242.

Its subcellular location is the mitochondrion inner membrane. The catalysed reaction is a ubiquinone + NADH + 5 H(+)(in) = a ubiquinol + NAD(+) + 4 H(+)(out). Functionally, core subunit of the mitochondrial membrane respiratory chain NADH dehydrogenase (Complex I) which catalyzes electron transfer from NADH through the respiratory chain, using ubiquinone as an electron acceptor. Essential for the catalytic activity of complex I. The protein is NADH-ubiquinone oxidoreductase chain 3 of Scotinomys teguina (Alston's brown mouse).